Reading from the N-terminus, the 329-residue chain is Isopenicillin N synthase (329 aa).

Isopenicillin N is bound by residues arginine 87, tyrosine 91, serine 183, and tyrosine 189. N-[(5S)-5-amino-5-carboxypentanoyl]-L-cysteinyl-D-valine is bound by residues arginine 87, tyrosine 91, serine 183, tyrosine 189, histidine 212, and aspartate 214. Residues 180–286 (TLSSVSLIRY…RLSLPFFLNA (107 aa)) form the Fe2OG dioxygenase domain. Fe(2+) is bound by residues histidine 212, aspartate 214, and histidine 268. Arginine 277 serves as a coordination point for 2-oxoglutarate. Isopenicillin N is bound at residue serine 279. Serine 279 is an N-[(5S)-5-amino-5-carboxypentanoyl]-L-cysteinyl-D-valine binding site.

Belongs to the iron/ascorbate-dependent oxidoreductase family. Fe cation is required as a cofactor. Requires L-ascorbate as cofactor.

It carries out the reaction N-[(5S)-5-amino-5-carboxypentanoyl]-L-cysteinyl-D-valine + O2 = isopenicillin N + 2 H2O. It functions in the pathway antibiotic biosynthesis; penicillin G biosynthesis; penicillin G from L-alpha-aminoadipate and L-cysteine and L-valine: step 2/3. Removes, in the presence of oxygen, 4 hydrogen atoms from delta-L-(alpha-aminoadipyl)-L-cysteinyl-D-valine (ACV) to form the azetidinone and thiazolidine rings of isopenicillin. The sequence is that of Isopenicillin N synthase (pcbC) from Streptomyces jumonjinensis.